Reading from the N-terminus, the 170-residue chain is Cilia- and flagella-associated protein 276 (170 aa).

Disordered stretches follow at residues 1–37 and 151–170; these read MPLTRDPFQNPALDKDDSYLGKSRASKKLPYKNPTHL and HTAATNGGYSRKNDGGFFST.

As to quaternary structure, microtubule inner protein component of sperm flagellar doublet microtubules. Expressed in trachea multiciliated cells.

It is found in the cytoplasm. It localises to the cytoskeleton. The protein localises to the cilium axoneme. The protein resides in the flagellum axoneme. Functionally, microtubule inner protein (MIP) part of the dynein-decorated doublet microtubules (DMTs) in cilia axoneme, which is required for motile cilia beating. May play an important role for the maintenance of myelin-axon integrity. May affect intracellular Ca(2+) homeostasis. The polypeptide is Cilia- and flagella-associated protein 276 (Bos taurus (Bovine)).